A 198-amino-acid chain; its full sequence is Carnitine operon protein CaiE (198 aa).

The disordered stretch occupies residues 179 to 198 (VEENRPRLKGTTDVKPKSAQ). Basic and acidic residues predominate over residues 180–198 (EENRPRLKGTTDVKPKSAQ).

It belongs to the transferase hexapeptide repeat family.

The protein operates within amine and polyamine metabolism; carnitine metabolism. Functionally, overproduction of CaiE stimulates the activity of CaiB and CaiD. The protein is Carnitine operon protein CaiE of Salmonella typhi.